A 210-amino-acid polypeptide reads, in one-letter code: ATP-dependent Clp protease proteolytic subunit (210 aa).

The active-site Nucleophile is the S113. Residue H138 is part of the active site.

Belongs to the peptidase S14 family. As to quaternary structure, fourteen ClpP subunits assemble into 2 heptameric rings which stack back to back to give a disk-like structure with a central cavity, resembling the structure of eukaryotic proteasomes.

Its subcellular location is the cytoplasm. It catalyses the reaction Hydrolysis of proteins to small peptides in the presence of ATP and magnesium. alpha-casein is the usual test substrate. In the absence of ATP, only oligopeptides shorter than five residues are hydrolyzed (such as succinyl-Leu-Tyr-|-NHMec, and Leu-Tyr-Leu-|-Tyr-Trp, in which cleavage of the -Tyr-|-Leu- and -Tyr-|-Trp bonds also occurs).. Cleaves peptides in various proteins in a process that requires ATP hydrolysis. Has a chymotrypsin-like activity. Plays a major role in the degradation of misfolded proteins. This is ATP-dependent Clp protease proteolytic subunit from Marinomonas sp. (strain MWYL1).